A 591-amino-acid polypeptide reads, in one-letter code: Metastasis-associated protein MTA3 (591 aa).

One can recognise a BAH domain in the interval 1–147 (MAANMYRVGD…PSVKTLLADK (147 aa)). The ELM2 domain occupies 148–258 (GEIRVGPKYQ…SAISVLVPLG (111 aa)). The region spanning 265–317 (DEMEEWSASEACLFEEALEKYGKDFNDIRQDFLPWKSLTSIIEYYYMWKTTDR) is the SANT domain. The GATA-type; atypical zinc-finger motif lies at 377-404 (CESCYATQSHQWYSWGPPNMQCRLCATC). The segment at 417-456 (PTQSDEEKSPSPTAEDPRARSHMSRQALQGMPVRNTGSPK) is disordered. Positions 421 to 435 (DEEKSPSPTAEDPRA) are enriched in basic and acidic residues. 2 positions are modified to phosphoserine: Ser-425 and Ser-427. Thr-452 bears the Phosphothreonine mark. At Ser-516 the chain carries Phosphoserine.

It belongs to the metastasis-associated protein family. Component of the nucleosome remodeling and deacetylase (NuRD) repressor complex, composed of core proteins MTA1, MTA2, MTA3, RBBP4, RBBP7, HDAC1, HDAC2, MBD2, MBD3, and peripherally associated proteins CDK2AP1, CDK2AP2, GATAD2A, GATAD2B, CHD3, CHD4 and CHD5. The exact stoichiometry of the NuRD complex is unknown, and some subunits such as MBD2 and MBD3, GATAD2A and GATAD2B, and CHD3, CHD4 and CHD5 define mutually exclusive NuRD complexes. Interacts with BCL6. Interacts with NACC2. Interacts with PWWP2B. As to expression, expressed in heart, brain, spleen, lung, liver and kidney.

Its subcellular location is the nucleus. The protein localises to the cytoplasm. In terms of biological role, acts as a component of the histone deacetylase NuRD complex which participates in the remodeling of chromatin. Plays a role in maintenance of the normal epithelial architecture through the repression of SNAI1 transcription in a histone deacetylase-dependent manner, and thus the regulation of E-cadherin levels. Contributes to transcriptional repression by BCL6. This chain is Metastasis-associated protein MTA3 (Mta3), found in Mus musculus (Mouse).